Here is a 55-residue protein sequence, read N- to C-terminus: UPF0434 protein BARBAKC583_1098 (55 aa).

Belongs to the UPF0434 family.

The chain is UPF0434 protein BARBAKC583_1098 from Bartonella bacilliformis (strain ATCC 35685 / KC583 / Herrer 020/F12,63).